Consider the following 41-residue polypeptide: Photosystem I reaction center subunit IX (41 aa).

The chain crosses the membrane as a helical span at residues 7–27 (YLSTAPVVALIWFTFTAGLLI).

This sequence belongs to the PsaJ family.

The protein localises to the plastid. Its subcellular location is the chloroplast thylakoid membrane. In terms of biological role, may help in the organization of the PsaE and PsaF subunits. The chain is Photosystem I reaction center subunit IX from Pleurastrum terricola (Filamentous green alga).